The primary structure comprises 266 residues: NAD kinase 1 (266 aa).

D45 serves as the catalytic Proton acceptor. Residues 45–46 (DG), 122–123 (NE), and R148 each bind NAD(+). D150 serves as a coordination point for ATP. NAD(+) is bound by residues S158 and 161–166 (TAYNKA).

This sequence belongs to the NAD kinase family. Homodimer. Ca(2+) serves as cofactor. Requires Mn(2+) as cofactor.

The protein localises to the cytoplasm. The catalysed reaction is NAD(+) + ATP = ADP + NADP(+) + H(+). Allosterically inhibited by NADP and activated by quinolinic acid. Strongly inhibited by HgCl(2). In terms of biological role, involved in the regulation of the intracellular balance of NAD and NADP, and is a key enzyme in the biosynthesis of NADP. Catalyzes specifically the phosphorylation on 2'-hydroxyl of the adenosine moiety of NAD to yield NADP. It can use ATP and other nucleoside triphosphates (GTP, UTP) as well as inorganic polyphosphate (poly(P)) as a source of phosphorus. This is NAD kinase 1 (ppnKA) from Bacillus subtilis (strain 168).